Here is a 199-residue protein sequence, read N- to C-terminus: Probable GTP-binding protein EngB (199 aa).

The region spanning 21–196 is the EngB-type G domain; that stretch reads TKPEYAFIGR…LTYIDEINKQ (176 aa). Residues 29 to 36, 56 to 60, 74 to 77, 141 to 144, and 175 to 177 contribute to the GTP site; these read GRSNVGKS, GKTQL, DLPG, TKID, and TSS. Residues S36 and T58 each contribute to the Mg(2+) site.

Belongs to the TRAFAC class TrmE-Era-EngA-EngB-Septin-like GTPase superfamily. EngB GTPase family. It depends on Mg(2+) as a cofactor.

Its function is as follows. Necessary for normal cell division and for the maintenance of normal septation. The protein is Probable GTP-binding protein EngB of Cytophaga hutchinsonii (strain ATCC 33406 / DSM 1761 / CIP 103989 / NBRC 15051 / NCIMB 9469 / D465).